The following is a 344-amino-acid chain: Anthranilate phosphoribosyltransferase (344 aa).

5-phospho-alpha-D-ribose 1-diphosphate contacts are provided by residues Gly85, Gly88–Asp89, Thr93, Asn95–Thr98, Lys113–Ser121, and Ser125. Gly85 lines the anthranilate pocket. Residue Ser97 participates in Mg(2+) binding. Arg171 serves as a coordination point for anthranilate. Residues Asp230 and Glu231 each contribute to the Mg(2+) site.

The protein belongs to the anthranilate phosphoribosyltransferase family. In terms of assembly, homodimer. Requires Mg(2+) as cofactor.

The catalysed reaction is N-(5-phospho-beta-D-ribosyl)anthranilate + diphosphate = 5-phospho-alpha-D-ribose 1-diphosphate + anthranilate. The protein operates within amino-acid biosynthesis; L-tryptophan biosynthesis; L-tryptophan from chorismate: step 2/5. Functionally, catalyzes the transfer of the phosphoribosyl group of 5-phosphorylribose-1-pyrophosphate (PRPP) to anthranilate to yield N-(5'-phosphoribosyl)-anthranilate (PRA). The polypeptide is Anthranilate phosphoribosyltransferase (Delftia acidovorans (strain DSM 14801 / SPH-1)).